We begin with the raw amino-acid sequence, 463 residues long: Retinoic acid receptor RXR-gamma (463 aa).

Residues 1–138 (MYGNYSHFMK…TSPGSLVKHI (138 aa)) form a modulating region. A disordered region spans residues 17 to 53 (GSPGHSGSTSMSPSAALSTGKPMDSHPSYTDTPVSAP). A compositionally biased stretch (polar residues) spans 21–33 (HSGSTSMSPSAAL). NR C4-type zinc fingers lie at residues 139–159 (CAIC…CEGC) and 175–199 (CRDN…YQKC). The nuclear receptor DNA-binding region spans 139–204 (CAICGDRSSG…RYQKCLVMGM (66 aa)). The interval 205 to 230 (KREAVQEERQRSRERAESEAECASSG) is hinge. A compositionally biased stretch (basic and acidic residues) spans 211–222 (EERQRSRERAES). The interval 211–232 (EERQRSRERAESEAECASSGHE) is disordered. The NR LBD domain occupies 231-459 (HEDMPVERIL…TFLMEMLETP (229 aa)).

The protein belongs to the nuclear hormone receptor family. NR2 subfamily. Homodimer. Heterodimer with a RAR molecule. Binds DNA preferentially as a RAR/RXR heterodimer. Interacts with RARA. In terms of processing, acetylated by EP300.

It is found in the nucleus. The protein resides in the cytoplasm. Receptor for retinoic acid. Retinoic acid receptors bind as heterodimers to their target response elements in response to their ligands, all-trans or 9-cis retinoic acid, and regulate gene expression in various biological processes. The RAR/RXR heterodimers bind to the retinoic acid response elements (RARE) composed of tandem 5'-AGGTCA-3' sites known as DR1-DR5. The high affinity ligand for RXRs is 9-cis retinoic acid. The protein is Retinoic acid receptor RXR-gamma (RXRG) of Sus scrofa (Pig).